We begin with the raw amino-acid sequence, 120 residues long: ADMGMNIAGGAYNFGYNTGDAGGHSRVESGSGSSVAGSYSYVDANGDRRTVQYTAGPGGYQASGDVGVDRRTAAAAAALAAMAPKAPIPAPAAAPAAPWYNPVPVAPAIMAHPGGYIAKW.

Positions 9 to 87 (GGAYNFGYNT…ALAAMAPKAP (79 aa)) constitute a Chitin-binding type R&amp;R domain.

Component of the rigid cuticle of the spider. The sequence is that of Adult-specific rigid cuticular protein 11.9 from Araneus diadematus (European garden spider).